Here is a 48-residue protein sequence, read N- to C-terminus: Sperm protamine P1 (48 aa).

It belongs to the protamine P1 family. In terms of tissue distribution, testis.

Its subcellular location is the nucleus. The protein localises to the chromosome. Protamines substitute for histones in the chromatin of sperm during the haploid phase of spermatogenesis. They compact sperm DNA into a highly condensed, stable and inactive complex. The protein is Sperm protamine P1 (PRM1) of Murina cyclotis (Round-eared tube-nosed bat).